Reading from the N-terminus, the 224-residue chain is MSAVGAATPYLHHPGDSHSGRVSFLGAQLPPEVAAMARLLGDLDRSTFRKLLKFVVSSLQGEDCREAVQRLGVSANLPEEQLGALLAGMHTLLQQALRLPPTSLKPDTFRDQLQELCIPQDLVGDLASVVFGSQRPLLDSVAQQQGAWLPHVADFRWRVDVAISTSALARSLQPSVLMQLKLSDGSAYRFEVPTAKFQELRYSVALVLKEMADLEKRCERRLQD.

The residue at position 2 (S2) is an N-acetylserine. One can recognise a COMM domain in the interval 151 to 215 (HVADFRWRVD…LVLKEMADLE (65 aa)).

This sequence belongs to the COMM domain-containing protein 5 family. As to quaternary structure, component of the commander complex consisting of the CCC subcomplex and the retriever subcomplex. Component of the CCC (COMMD/CCDC22/CCDC93) subcomplex consisting of COMMD1, COMMD2, COMMD3, COMMD4, COMMD5, COMMD6, COMMD7, COMMD8, COMMD9, COMMD10, CCDC22 and CCDC93; within the complex forms a heterodimer with COMMD10. Interacts (via COMM domain) with COMMD1 (via COMM domain). Interacts with RELA, RELB, NFKB1/p105. Interacts with CCDC22, CCDC93, SCNN1B, CUL2, CUL3, CUL4A, CUL4B, CUL7. Highly expressed in heart, stomach, jejunum, kidney, liver, and adrenal gland. Expression was generally higher in adult organs than in fetal tissues, particularly in heart, kidney, and liver.

The protein resides in the cytoplasm. Its subcellular location is the nucleus. Its function is as follows. Scaffold protein in the commander complex that is essential for endosomal recycling of transmembrane cargos; the commander complex is composed of the CCC subcomplex and the retriever subcomplex. May modulate activity of cullin-RING E3 ubiquitin ligase (CRL) complexes. Negatively regulates cell proliferation. Negatively regulates cell cycle G2/M phase transition probably by transactivating p21/CDKN1A through the p53/TP53-independent signaling pathway. Involved in kidney proximal tubule morphogenesis. Down-regulates activation of NF-kappa-B. In Homo sapiens (Human), this protein is COMM domain-containing protein 5 (COMMD5).